The primary structure comprises 418 residues: Probable serine hydroxymethyltransferase (418 aa).

(6S)-5,6,7,8-tetrahydrofolate contacts are provided by residues leucine 118 and 122–124 (GHL). An N6-(pyridoxal phosphate)lysine modification is found at lysine 226. A (6S)-5,6,7,8-tetrahydrofolate-binding site is contributed by 351-353 (SPF).

This sequence belongs to the SHMT family. In terms of assembly, homodimer. It depends on pyridoxal 5'-phosphate as a cofactor.

It localises to the cytoplasm. The catalysed reaction is (6R)-5,10-methylene-5,6,7,8-tetrahydrofolate + glycine + H2O = (6S)-5,6,7,8-tetrahydrofolate + L-serine. It functions in the pathway one-carbon metabolism; tetrahydrofolate interconversion. In terms of biological role, catalyzes the reversible interconversion of serine and glycine with tetrahydrofolate (THF) serving as the one-carbon carrier. This reaction serves as the major source of one-carbon groups required for the biosynthesis of purines, thymidylate, methionine, and other important biomolecules. The chain is Probable serine hydroxymethyltransferase from Mesomycoplasma hyopneumoniae (strain 7448) (Mycoplasma hyopneumoniae).